The primary structure comprises 296 residues: Chondrolectin (296 aa).

An N-terminal signal peptide occupies residues 1–20; that stretch reads MRATLRILCALTFLVSCSRG. At 21-238 the chain is on the extracellular side; it reads ARVVSGQTVC…RLIIAGPSSM (218 aa). In terms of domain architecture, C-type lectin spans 38 to 187; it reads CYKIAYFKDV…CNMKHNFICK (150 aa). The segment covering 197–221 has biased composition (basic and acidic residues); it reads VQSDRPGGHDVDLSTEDKEDRRTPP. Positions 197–229 are disordered; the sequence is VQSDRPGGHDVDLSTEDKEDRRTPPTDEDESPR. A helical transmembrane segment spans residues 239 to 266; the sequence is LLIYVIIPTIPLLLLILVASGTCCFQML. At 267 to 296 the chain is on the cytoplasmic side; that stretch reads SKSKPRTKTSVNQSTLWISKTPKIDSGMEV.

As to expression, expressed in developing motor neurons.

Its subcellular location is the membrane. Plays a role in the development of the nervous system such as in neurite outgrowth and elongation. Involved in motor axon growth and guidance. Required for correct interactions of motor axons with the horizontal myoseptum. This chain is Chondrolectin (chodl), found in Danio rerio (Zebrafish).